We begin with the raw amino-acid sequence, 565 residues long: Perivitellin-2 67 kDa subunit (565 aa).

The signal sequence occupies residues 1 to 26; sequence MSQLRWWVVSQLLLLIVVCILDHSEG. The region spanning 27–340 is the MACPF domain; sequence ARVCPKIVPG…AKVANLDRLT (314 aa).

Perivitellin-2 is a heterooctamer of 4 identical 98 kDa heterodimers, each composed of one 31 kDa and one 67 kDa subunits. The 98 kDa heterodimer subunits are held together by disulfide bridges while the heterodimers are assembled into the native perivitellin-2 octamer by non-covalent forces. Glycosylated. Contains four O-linked and one N-linked oligosaccharide bonds. The protein contains 2.5% of carbohydrates (high levels of mannose, galactose, and NAcGlucosamine, and small amounts of NacGalactosamine). Post-translationally, PV2 is a very high density lipoprotein (VHDL). It contains 3.75% of lipids. The major lipid classes are free sterols and phospholipids and also have significant quantities of energy-providing triacylglycerides and free fatty acids. Produced by albumen secretory cells. Found in developing eggs.

Its subcellular location is the secreted. The protein localises to the target cell membrane. The egg defensive protein perivitellin-2 is a pore-forming two-subunit glycoprotein that affects both the nervous and digestive systems of mammals. In addition, it is a source of both structural and energetic molecules during embryonic development. The tachylectin subunit (31 kDa) binds target membranes while the MACPF subunit (67 kDa) disrupts lipid bilayers forming large pores altering the plasma membrance conductance. Both in vivo and in vitro, the protein shows wide pH range stability and is resistant to enzymatic proteolysis from gastrointestinal environments. It specifically binds mature enterocytes but does not cause cell disruption on caco-2 (human colorectal adenocarcinoma cells) or rat intestinal cells. After oral administration to mice, it binds enterocytes and induces large dose-dependent morphological changes on their small intestine mucosa, reducing the absorptive surface. Additionally, it is detected in the Peyer's patches where it activates lymphoid follicles and triggers apoptosis. The toxin can also traverse the intestinal barrier and induce oral adaptive immunity with evidence of circulating antibody response. The toxin also shows hemagglutination properties thanks to the tachylectin subunit, but does not show hemolytic activity. In addition to enterotoxin activity, the toxin also acts as a neurotoxin, since an intraperitoneal injection induces paralysis of the mice rear limbs, followed by death. This chain is Perivitellin-2 67 kDa subunit, found in Pomacea canaliculata (Golden apple snail).